The sequence spans 493 residues: Cholesteryl ester transfer protein (493 aa).

Residues 1-17 (MLAATVLTLALLGNVHA) form the signal peptide. Residues N59 and N105 are each glycosylated (N-linked (GlcNAc...) asparagine). C160 and C201 are joined by a disulfide. N257, N358, and N413 each carry an N-linked (GlcNAc...) asparagine glycan.

This sequence belongs to the BPI/LBP/Plunc superfamily. BPI/LBP family. As to expression, probably primarily expressed in liver and adipose tissues. Detected in adrenal gland, mesenteric fat, spleen and aorta.

The protein localises to the secreted. The catalysed reaction is cholesteryl (9Z-octadecenoate)(in) = cholesteryl (9Z-octadecenoate)(out). It catalyses the reaction 1,2,3-tri-(9Z-octadecenoyl)-glycerol(in) = 1,2,3-tri-(9Z-octadecenoyl)-glycerol(out). It carries out the reaction cholesteryl (9Z,12Z)-octadecadienoate(in) = cholesteryl (9Z,12Z)-octadecadienoate(out). In terms of biological role, involved in the transfer of neutral lipids, including cholesteryl ester and triglyceride, among lipoprotein particles. Allows the net movement of cholesteryl ester from high density lipoproteins/HDL to triglyceride-rich very low density lipoproteins/VLDL, and the equimolar transport of triglyceride from VLDL to HDL. Regulates the reverse cholesterol transport, by which excess cholesterol is removed from peripheral tissues and returned to the liver for elimination. This is Cholesteryl ester transfer protein from Macaca fascicularis (Crab-eating macaque).